The following is a 664-amino-acid chain: Type IV inositol polyphosphate 5-phosphatase 3 (664 aa).

Residues Gly35–Lys76 are disordered. Residues Tyr40 to Gly66 are compositionally biased toward acidic residues. 2 catalytic regions span residues Glu514–Ser529 and Pro592–Lys607.

This sequence belongs to the inositol polyphosphate 5-phosphatase family.

It catalyses the reaction a 1,2-diacyl-sn-glycero-3-phospho-(1D-myo-inositol-4,5-bisphosphate) + H2O = a 1,2-diacyl-sn-glycero-3-phospho-(1D-myo-inositol 4-phosphate) + phosphate. The catalysed reaction is a 1,2-diacyl-sn-glycero-3-phospho-(1D-myo-inositol-3,4,5-trisphosphate) + H2O = a 1,2-diacyl-sn-glycero-3-phospho-(1D-myo-inositol-3,4-bisphosphate) + phosphate. In terms of biological role, has phosphatase activity toward PtdIns(4,5)P2 and PtdIns(3,4,5)P3. The protein is Type IV inositol polyphosphate 5-phosphatase 3 of Arabidopsis thaliana (Mouse-ear cress).